We begin with the raw amino-acid sequence, 601 residues long: Zinc finger CCCH domain-containing protein 33 (601 aa).

ANK repeat units lie at residues 71–101 (ERRTAAMVAALYGSTGVLGYVVAAAPAEAAR) and 106–138 (DGATPLHMAAAGGAANAVAATRLLLAAGASVDA). Residues 167–180 (PAVSPSSSPKKSAS) are compositionally biased toward low complexity. The disordered stretch occupies residues 167 to 203 (PAVSPSSSPKKSASPPSPPPPQEAKKEYPPDLTLPDL). 2 C3H1-type zinc fingers span residues 252–280 (SYSCVPCPEFRKGGSCRKGDACEYAHGVF) and 288–312 (QYRTRLCKDEVGCARRICFFAHKPD).

The chain is Zinc finger CCCH domain-containing protein 33 from Oryza sativa subsp. japonica (Rice).